The chain runs to 241 residues: SURF1-like protein (241 aa).

The next 2 helical transmembrane spans lie at 5-25 (LTVLITFIILVLLGFWQLNRL) and 199-219 (LEYAFTWFGLAASLVVIYRIY).

This sequence belongs to the SURF1 family.

The protein localises to the cell membrane. The protein is SURF1-like protein of Rickettsia bellii (strain RML369-C).